Consider the following 358-residue polypeptide: Dynein axonemal assembly factor 10 (358 aa).

WD repeat units lie at residues 64-106 (EKPK…TPVY), 116-155 (NCID…TPVA), 163-206 (EAKR…VRWE), 208-250 (NIKN…PTKG), 258-298 (AHKS…QRSR), and 320-358 (LSTQ…LNRL).

Interacts with PIH1D1; the interaction associates DNAAF10 with the R2TP complex. Interacts with several dynein axonemal assembly factors.

Its subcellular location is the dynein axonemal particle. Key assembly factor specifically required for the stability of axonemal dynein heavy chains in cytoplasm. The polypeptide is Dynein axonemal assembly factor 10 (dnaaf10) (Xenopus laevis (African clawed frog)).